The chain runs to 625 residues: ATP-dependent rRNA helicase spb4 (625 aa).

Residues tryptophan 14–alanine 42 carry the Q motif motif. The 202-residue stretch at isoleucine 45–isoleucine 246 folds into the Helicase ATP-binding domain. Alanine 58–threonine 65 lines the ATP pocket. The short motif at aspartate 194–aspartate 197 is the DEAD box element. Positions alanine 278–isoleucine 436 constitute a Helicase C-terminal domain. Residues lysine 550–glutamate 597 are disordered. 2 stretches are compositionally biased toward basic and acidic residues: residues arginine 553–arginine 570 and arginine 577–glutamate 597. Residues serine 557–aspartate 614 are a coiled coil.

The protein belongs to the DEAD box helicase family. DDX55/SPB4 subfamily. In terms of assembly, component of pre-60S ribosomal complexes.

It localises to the nucleus. The protein localises to the nucleolus. It catalyses the reaction ATP + H2O = ADP + phosphate + H(+). In terms of biological role, ATP-binding RNA helicase involved in the biogenesis of 60S ribosomal subunits. Binds 90S pre-ribosomal particles and dissociates from pre-60S ribosomal particles after processing of 27SB pre-rRNA. Required for the normal formation of 18S rRNA through the processing of pre-rRNAs at sites A0, A1 and A2, and the normal formation of 25S and 5.8S rRNAs through the processing of pre-rRNAs at sites C1 and C2. The chain is ATP-dependent rRNA helicase spb4 from Sclerotinia sclerotiorum (strain ATCC 18683 / 1980 / Ss-1) (White mold).